Here is a 248-residue protein sequence, read N- to C-terminus: Uracil-DNA glycosylase (248 aa).

The active-site Proton acceptor is the Asp85.

This sequence belongs to the uracil-DNA glycosylase (UDG) superfamily. UNG family.

The protein localises to the cytoplasm. It catalyses the reaction Hydrolyzes single-stranded DNA or mismatched double-stranded DNA and polynucleotides, releasing free uracil.. In terms of biological role, excises uracil residues from the DNA which can arise as a result of misincorporation of dUMP residues by DNA polymerase or due to deamination of cytosine. In Deinococcus deserti (strain DSM 17065 / CIP 109153 / LMG 22923 / VCD115), this protein is Uracil-DNA glycosylase.